Here is an 855-residue protein sequence, read N- to C-terminus: Envelope glycoprotein gp160 (855 aa).

Positions 1 to 31 are cleaved as a signal peptide; sequence MKVKGTRRNYQHLWRWGTLLLGMLMICSATE. Residues 32–683 are Extracellular-facing; that stretch reads KLWVTVYYGV…ITNWLWYIKI (652 aa). The cysteines at positions 53 and 73 are disulfide-linked. 19 N-linked (GlcNAc...) asparagine; by host glycosylation sites follow: N87, N129, N140, N154, N158, N184, N190, N200, N233, N244, N265, N279, N292, N298, N304, N334, N341, N358, and N364. Intrachain disulfides connect C118–C208, C125–C199, C130–C155, C221–C250, and C231–C242. The tract at residues 130-154 is V1; it reads CTDLGKATNTNSSNWKEEIKGEIKN. Residues 155–199 are V2; the sequence is CSFNITTSIRDKIQKENALFRNLDVVPIDNASTTTNYTNYRLIHC. Residues 299-332 form a V3 region; sequence CTRPNNNTRKSIYIGPGRAFHTTGRIIGDIRKAH. C299 and C333 are oxidised to a cystine. The segment at 366-376 is CD4-binding loop; it reads SSGGDPEIVMH. 2 disulfides stabilise this stretch: C380–C442 and C387–C415. The segment at 387–415 is V4; it reads CNTTQLFNNTWRLNHTEGTKGNDTIILPC. Residues N388, N394, N400, N408, N445, N458, and N461 are each glycosylated (N-linked (GlcNAc...) asparagine; by host). V5 regions lie at residues 458-469 and 460-469; these read NVTNDTEVFRPG and TNDTEVFRPG. The tract at residues 510 to 531 is fusion peptide; the sequence is AVGIVGAMFLGFLGAAGSTMGA. The tract at residues 573 to 591 is immunosuppression; the sequence is KQLQARVLAVERYLRDQQL. C597 and C603 form a disulfide bridge. 4 N-linked (GlcNAc...) asparagine; by host glycosylation sites follow: N610, N615, N624, and N636. Residues 632–666 adopt a coiled-coil conformation; the sequence is REIDNYTNTIYTLLEESQNQQEKNEQELLELDKWA. The MPER; binding to GalCer stretch occupies residues 661–682; sequence ELDKWASLWNWFSITNWLWYIK. The chain crosses the membrane as a helical span at residues 684–704; sequence FIMIVGGLVGLRIVFAVLSIV. Over 705–855 the chain is Cytoplasmic; sequence NRVRQGYSPL…IRQGLERLLL (151 aa). The YXXL motif; contains endocytosis signal motif lies at 711-714; it reads YSPL. Positions 720-739 are disordered; that stretch reads LPVPRGPDRPDGIEEEGGER. Residue C763 is the site of S-palmitoyl cysteine; by host attachment. The Di-leucine internalization motif motif lies at 854–855; sequence LL.

It belongs to the HIV-1 env protein family. In terms of assembly, the mature envelope protein (Env) consists of a homotrimer of non-covalently associated gp120-gp41 heterodimers. The resulting complex protrudes from the virus surface as a spike. There seems to be as few as 10 spikes on the average virion. Interacts with host CD4, CCR5 and CXCR4. Gp120 also interacts with the C-type lectins CD209/DC-SIGN and CLEC4M/DC-SIGNR (collectively referred to as DC-SIGN(R)). Gp120 and gp41 interact with GalCer. Gp120 interacts with host ITGA4/ITGB7 complex; on CD4+ T-cells, this interaction results in rapid activation of integrin ITGAL/LFA-1, which facilitates efficient cell-to-cell spreading of HIV-1. Gp120 interacts with cell-associated heparan sulfate; this interaction increases virus infectivity on permissive cells and may be involved in infection of CD4- cells. The mature envelope protein (Env) consists of a homotrimer of non-covalently associated gp120-gp41 heterodimers. The resulting complex protrudes from the virus surface as a spike. There seems to be as few as 10 spikes on the average virion. Post-translationally, highly glycosylated by host. The high number of glycan on the protein is reffered to as 'glycan shield' because it contributes to hide protein sequence from adaptive immune system. Palmitoylation of the transmembrane protein and of Env polyprotein (prior to its proteolytic cleavage) is essential for their association with host cell membrane lipid rafts. Palmitoylation is therefore required for envelope trafficking to classical lipid rafts, but not for viral replication. In terms of processing, specific enzymatic cleavages in vivo yield mature proteins. Envelope glycoproteins are synthesized as an inactive precursor that is heavily N-glycosylated and processed likely by host cell furin in the Golgi to yield the mature SU and TM proteins. The cleavage site between SU and TM requires the minimal sequence [KR]-X-[KR]-R. About 2 of the 9 disulfide bonds of gp41 are reduced by P4HB/PDI, following binding to CD4 receptor.

It localises to the virion membrane. It is found in the host cell membrane. The protein resides in the host endosome membrane. Oligomerizes in the host endoplasmic reticulum into predominantly trimers. In a second time, gp160 transits in the host Golgi, where glycosylation is completed. The precursor is then proteolytically cleaved in the trans-Golgi and thereby activated by cellular furin or furin-like proteases to produce gp120 and gp41. Its function is as follows. Attaches the virus to the host lymphoid cell by binding to the primary receptor CD4. This interaction induces a structural rearrangement creating a high affinity binding site for a chemokine coreceptor like CXCR4 and/or CCR5. Acts as a ligand for CD209/DC-SIGN and CLEC4M/DC-SIGNR, which are respectively found on dendritic cells (DCs), and on endothelial cells of liver sinusoids and lymph node sinuses. These interactions allow capture of viral particles at mucosal surfaces by these cells and subsequent transmission to permissive cells. HIV subverts the migration properties of dendritic cells to gain access to CD4+ T-cells in lymph nodes. Virus transmission to permissive T-cells occurs either in trans (without DCs infection, through viral capture and transmission), or in cis (following DCs productive infection, through the usual CD4-gp120 interaction), thereby inducing a robust infection. In trans infection, bound virions remain infectious over days and it is proposed that they are not degraded, but protected in non-lysosomal acidic organelles within the DCs close to the cell membrane thus contributing to the viral infectious potential during DCs' migration from the periphery to the lymphoid tissues. On arrival at lymphoid tissues, intact virions recycle back to DCs' cell surface allowing virus transmission to CD4+ T-cells. In terms of biological role, acts as a class I viral fusion protein. Under the current model, the protein has at least 3 conformational states: pre-fusion native state, pre-hairpin intermediate state, and post-fusion hairpin state. During fusion of viral and target intracellular membranes, the coiled coil regions (heptad repeats) assume a trimer-of-hairpins structure, positioning the fusion peptide in close proximity to the C-terminal region of the ectodomain. The formation of this structure appears to drive apposition and subsequent fusion of viral and target cell membranes. Complete fusion occurs in host cell endosomes and is dynamin-dependent, however some lipid transfer might occur at the plasma membrane. The virus undergoes clathrin-dependent internalization long before endosomal fusion, thus minimizing the surface exposure of conserved viral epitopes during fusion and reducing the efficacy of inhibitors targeting these epitopes. Membranes fusion leads to delivery of the nucleocapsid into the cytoplasm. In Homo sapiens (Human), this protein is Envelope glycoprotein gp160.